Reading from the N-terminus, the 102-residue chain is RNA-binding protein Hfq (102 aa).

Positions 9 to 68 (DPFLNALRRERVPVSIYLVNGIKLQGQIESFDQFVILLKNTVSQMVYKHAISTVVPSRPV) constitute a Sm domain. Positions 63–102 (VPSRPVSHHSNNASGGTSSNYHHGSSAQNTSAQQDSEETE) are disordered. Residues 70–96 (HHSNNASGGTSSNYHHGSSAQNTSAQQ) show a composition bias toward polar residues.

Belongs to the Hfq family. Homohexamer.

In terms of biological role, RNA chaperone that binds small regulatory RNA (sRNAs) and mRNAs to facilitate mRNA translational regulation in response to envelope stress, environmental stress and changes in metabolite concentrations. Also binds with high specificity to tRNAs. This Shigella boydii serotype 18 (strain CDC 3083-94 / BS512) protein is RNA-binding protein Hfq.